The chain runs to 792 residues: E3 UFM1-protein ligase 1 (792 aa).

At A2 the chain carries N-acetylalanine. The mediates interaction with DDRGK1 stretch occupies residues 2–200; the sequence is ADAWEEIRRL…RGLFSAITRP (199 aa). Residues 2–212 form a required for E3 UFM1-protein ligase activity region; it reads ADAWEEIRRL…VNSLISRYGF (211 aa). Positions 121–250 are involved in CDK5RAP3-binding; sequence DRLAEEVNDK…KAVFIPDIYS (130 aa). A mediates interaction with TRIP4 region spans residues 200 to 400; it reads PTAVNSLISR…NPVHLITEED (201 aa). Residues 412 to 471 are disordered; the sequence is TSKKDKKDERRRKATEGSGSVRGGGGSNAREYKIKKTKKKGRKDDDSDDESSHTGKKKPE. Position 433 is an omega-N-methylarginine (R433). The span at 453–471 shows a compositional bias: basic and acidic residues; it reads RKDDDSDDESSHTGKKKPE. Position 458 is a phosphoserine (S458). A mediates interaction with CDK5RAP3 region spans residues 488–682; the sequence is LQDAPEEFIS…QLKVTEDPAL (195 aa). Position 534 is a phosphothreonine (T534). Position 752 is a phosphoserine (S752).

It belongs to the UFL1 family. Catalytic component of the UFM1 ribosome E3 ligase (UREL) complex, composed of UFL1, DDRGK1 and CDK5RAP3. Interacts with E2-like enzyme UFC1. Interacts with RELA. Interacts with NBN; promoting recruitment to double-strand breaks following DNA damage. Interacts (when phosphorylated) with YWHAG/14-3-3-gamma; sequestering UFL1 and preventing its association with PDCD1/PD-1 substrate. Post-translationally, ubiquitinated, leading to its degradation by the proteasome. Interaction with CDK5RAP3 protects both proteins against ubiquitination and degradation via the proteasome. Phosphorylation at Thr-534 by AMPK promotes its interaction with YWHAG/14-3-3-gamma, thereby preventing UFL1 association with PDCD1/PD-1 substrate.

It localises to the endoplasmic reticulum membrane. Its subcellular location is the cytoplasm. The protein resides in the cytosol. It is found in the nucleus. The protein localises to the chromosome. Functionally, E3 protein ligase that mediates ufmylation, the covalent attachment of the ubiquitin-like modifier UFM1 to lysine residues on target proteins, and which plays a key role in various processes, such as ribosome recycling, response to DNA damage, interferon response or reticulophagy (also called ER-phagy). Catalyzes ufmylation of many protein, such as CD274/PD-L1, CDK5RAP3, CYB5R3, DDRGK1, EIF6, histone H4, MRE11, P4HB, PDCD1/PD-1, TRIP4, RPN1, RPS20/uS10, RPL10/uL16, RPL26/uL24, SYVN1/HRD1 and TP53/p53. As part of the UREL complex, plays a key role in ribosome recycling by catalyzing mono-ufmylation of RPL26/uL24 subunit of the 60S ribosome. Ufmylation of RPL26/uL24 occurs on free 60S ribosomes following ribosome dissociation: it weakens the junction between post-termination 60S subunits and SEC61 translocons, promoting release and recycling of the large ribosomal subunit from the endoplasmic reticulum membrane. Ufmylation of RPL26/uL24 and subsequent 60S ribosome recycling either take place after normal termination of translation or after ribosome stalling during cotranslational translocation at the endoplasmic reticulum. Involved in reticulophagy in response to endoplasmic reticulum stress by mediating ufmylation of proteins such as CYB5R3 and RPN1, thereby promoting lysosomal degradation of ufmylated proteins. Ufmylation in response to endoplasmic reticulum stress is essential for processes such as hematopoiesis, blood vessel morphogenesis or inflammatory response. Regulates inflammation in response to endoplasmic reticulum stress by promoting reticulophagy, leading to inhibit the activity of the NF-kappa-B transcription factor. Mediates ufmylation of DDRGK1 and CDK5RAP3; the role of these modifications is however unclear: as both DDRGK1 and CDK5RAP3 act as substrate adapters for ufmylation, it is uncertain whether ufmylation of these proteins is, a collateral effect or is required for ufmylation. Acts as a negative regulator of T-cell activation by mediating ufmylation and stabilization of PDCD1/PD-1. Also involved in the response to DNA damage: recruited to double-strand break sites following DNA damage and mediates monoufmylation of histone H4 and ufmylation of MRE11. Mediates ufmylation of TP53/p53, promoting its stability. Catalyzes ufmylation of TRIP4, thereby playing a role in nuclear receptor-mediated transcription. Required for hematopoietic stem cell function and hematopoiesis. The sequence is that of E3 UFM1-protein ligase 1 from Bos taurus (Bovine).